The chain runs to 125 residues: Ribosome-binding factor A (125 aa).

It belongs to the RbfA family. In terms of assembly, monomer. Binds 30S ribosomal subunits, but not 50S ribosomal subunits or 70S ribosomes.

It is found in the cytoplasm. Its function is as follows. One of several proteins that assist in the late maturation steps of the functional core of the 30S ribosomal subunit. Associates with free 30S ribosomal subunits (but not with 30S subunits that are part of 70S ribosomes or polysomes). Required for efficient processing of 16S rRNA. May interact with the 5'-terminal helix region of 16S rRNA. This chain is Ribosome-binding factor A, found in Xylella fastidiosa (strain M23).